A 158-amino-acid chain; its full sequence is Small ribosomal subunit protein uS7 (158 aa).

The protein belongs to the universal ribosomal protein uS7 family. In terms of assembly, part of the 30S ribosomal subunit. Contacts proteins S9 and S11.

Its function is as follows. One of the primary rRNA binding proteins, it binds directly to 16S rRNA where it nucleates assembly of the head domain of the 30S subunit. Is located at the subunit interface close to the decoding center, probably blocks exit of the E-site tRNA. The polypeptide is Small ribosomal subunit protein uS7 (Acidiphilium cryptum (strain JF-5)).